Reading from the N-terminus, the 496-residue chain is Lysine--tRNA ligase (496 aa).

Residues E408 and E415 each contribute to the Mg(2+) site.

Belongs to the class-II aminoacyl-tRNA synthetase family. As to quaternary structure, homodimer. The cofactor is Mg(2+).

Its subcellular location is the cytoplasm. The enzyme catalyses tRNA(Lys) + L-lysine + ATP = L-lysyl-tRNA(Lys) + AMP + diphosphate. This is Lysine--tRNA ligase from Legionella pneumophila (strain Paris).